Here is a 98-residue protein sequence, read N- to C-terminus: Small ribosomal subunit protein bS18c (98 aa).

The span at 1-13 shows a compositional bias: basic and acidic residues; that stretch reads MSKQSFDFKRYKP. The segment at 1 to 26 is disordered; it reads MSKQSFDFKRYKPEAPSGSRKRPLKK.

Belongs to the bacterial ribosomal protein bS18 family. In terms of assembly, part of the 30S ribosomal subunit.

It localises to the plastid. Its subcellular location is the chloroplast. This chain is Small ribosomal subunit protein bS18c, found in Gnetum parvifolium (Small-leaved jointfir).